A 65-amino-acid chain; its full sequence is Large ribosomal subunit protein bL33m (65 aa).

Residues 1–8 constitute a mitochondrion transit peptide; it reads MFLTTANL.

It belongs to the bacterial ribosomal protein bL33 family. Component of the mitochondrial ribosome large subunit (39S) which comprises a 16S rRNA and about 50 distinct proteins.

It is found in the mitochondrion. The polypeptide is Large ribosomal subunit protein bL33m (mrpl33) (Tetraodon nigroviridis (Spotted green pufferfish)).